Here is a 377-residue protein sequence, read N- to C-terminus: Cytoplasmic tRNA 2-thiolation protein 1 (377 aa).

This sequence belongs to the TtcA family. CTU1/NCS6/ATPBD3 subfamily.

The protein resides in the cytoplasm. It functions in the pathway tRNA modification; 5-methoxycarbonylmethyl-2-thiouridine-tRNA biosynthesis. In terms of biological role, plays a central role in 2-thiolation of mcm(5)S(2)U at tRNA wobble positions of tRNA(Lys), tRNA(Glu) and tRNA(Gln). Directly binds tRNAs and probably acts by catalyzing adenylation of tRNAs, an intermediate required for 2-thiolation. It is unclear whether it acts as a sulfurtransferase that transfers sulfur from thiocarboxylated URM1 onto the uridine of tRNAs at wobble position. Prior mcm(5) tRNA modification by the elongator complex is required for 2-thiolation. May also be involved in protein urmylation. The chain is Cytoplasmic tRNA 2-thiolation protein 1 from Debaryomyces hansenii (strain ATCC 36239 / CBS 767 / BCRC 21394 / JCM 1990 / NBRC 0083 / IGC 2968) (Yeast).